Consider the following 339-residue polypeptide: Ketol-acid reductoisomerase (NADP(+)) (339 aa).

The 182-residue stretch at 1–182 (MRVYYDRDAD…GGGRAGIIET (182 aa)) folds into the KARI N-terminal Rossmann domain. Residues 24-27 (YGSQ), R48, S51, S53, and 83-86 (DELQ) each bind NADP(+). H108 is an active-site residue. G134 contributes to the NADP(+) binding site. Positions 183–328 (TFREECETDL…AKLRDMMPWI (146 aa)) constitute a KARI C-terminal knotted domain. Mg(2+) contacts are provided by D191, E195, E227, and E231. Residue S252 coordinates substrate.

Belongs to the ketol-acid reductoisomerase family. Requires Mg(2+) as cofactor.

It carries out the reaction (2R)-2,3-dihydroxy-3-methylbutanoate + NADP(+) = (2S)-2-acetolactate + NADPH + H(+). The catalysed reaction is (2R,3R)-2,3-dihydroxy-3-methylpentanoate + NADP(+) = (S)-2-ethyl-2-hydroxy-3-oxobutanoate + NADPH + H(+). It functions in the pathway amino-acid biosynthesis; L-isoleucine biosynthesis; L-isoleucine from 2-oxobutanoate: step 2/4. It participates in amino-acid biosynthesis; L-valine biosynthesis; L-valine from pyruvate: step 2/4. Functionally, involved in the biosynthesis of branched-chain amino acids (BCAA). Catalyzes an alkyl-migration followed by a ketol-acid reduction of (S)-2-acetolactate (S2AL) to yield (R)-2,3-dihydroxy-isovalerate. In the isomerase reaction, S2AL is rearranged via a Mg-dependent methyl migration to produce 3-hydroxy-3-methyl-2-ketobutyrate (HMKB). In the reductase reaction, this 2-ketoacid undergoes a metal-dependent reduction by NADPH to yield (R)-2,3-dihydroxy-isovalerate. The polypeptide is Ketol-acid reductoisomerase (NADP(+)) (Rhodopseudomonas palustris (strain ATCC BAA-98 / CGA009)).